The chain runs to 181 residues: Ion-translocating oxidoreductase complex subunit B (181 aa).

Residues 1–26 (MLEAVSAVMSLGGMALFAGLGLGYAA) are hydrophobic. In terms of domain architecture, 4Fe-4S spans 32 to 90 (EADPVVEKLEALLPATNCGMCGHPGCGPYAQAITEGEAINLCTPGGKAVMESIAAMLGV). Residues cysteine 49, cysteine 52, cysteine 57, cysteine 73, cysteine 110, cysteine 113, cysteine 116, cysteine 120, cysteine 140, cysteine 143, cysteine 146, and cysteine 150 each contribute to the [4Fe-4S] cluster site. 4Fe-4S ferredoxin-type domains lie at 101–130 (KVAY…GANK) and 131–160 (QSHT…MQPV).

Belongs to the 4Fe4S bacterial-type ferredoxin family. RnfB subfamily. As to quaternary structure, the complex is composed of six subunits: RnfA, RnfB, RnfC, RnfD, RnfE and RnfG. It depends on [4Fe-4S] cluster as a cofactor.

It is found in the cell inner membrane. Its function is as follows. Part of a membrane-bound complex that couples electron transfer with translocation of ions across the membrane. The protein is Ion-translocating oxidoreductase complex subunit B of Magnetococcus marinus (strain ATCC BAA-1437 / JCM 17883 / MC-1).